Consider the following 110-residue polypeptide: MKYLVGCLCLAAICLSAGAQRKKVKCNLYMLKRSLVHYISRDRTGTRVMPCPPGTIFSEGHCGCVSLTNGCDMRPYSGRKYKHWIHGKWRTRYCPAGTTLNQSKCVCDHA.

Positions Met-1–Ala-19 are cleaved as a signal peptide. Residue Asn-101 is glycosylated (N-linked (GlcNAc...) asparagine).

As to expression, component of the acid-soluble and acid-insoluble organic matrix of prismatic shell layers (at protein level).

Its subcellular location is the secreted. This is an uncharacterized protein from Haliotis asinina (Donkey's ear abalone).